Here is a 204-residue protein sequence, read N- to C-terminus: MALSLAINVPPVRDNLLRPQPFQSQFRPNLLKFPIPSSARIRCSSSSSFNDISLKTVTPDNKNSFVCRFNATQLEVQETNQPYAETYAVGRHIRMSADKARRVVDQIRGRPYEASLMVLELMPYRACEAIIKIVFSAGANASHNLGLSKSSLFISKAEVNEGKTLKRVRARAQGRANQILKRTCHITITVRGLPDESDKEENSS.

It belongs to the universal ribosomal protein uL22 family. Part of the 50S ribosomal subunit.

The protein localises to the plastid. It is found in the chloroplast. In terms of biological role, this protein binds specifically to 23S rRNA. Functionally, the globular domain of the protein is located near the polypeptide exit tunnel on the outside of the subunit, while an extended beta-hairpin is found that lines the wall of the exit tunnel in the center of the 70S ribosome. This Pisum sativum (Garden pea) protein is Large ribosomal subunit protein uL22c (rpl22).